The chain runs to 261 residues: uncharacterized protein (261 aa).

The signal sequence occupies residues 1–22; the sequence is MIHSKKLTLGICLVLLIILIGG. Residue Cys23 is the site of N-palmitoyl cysteine attachment. Cys23 carries the S-diacylglycerol cysteine lipid modification.

The protein belongs to the staphylococcal tandem lipoprotein family.

The protein localises to the cell membrane. This is an uncharacterized protein from Staphylococcus aureus (strain USA300).